The following is a 368-amino-acid chain: MTVKLTIDCMGGDHGPSVTVPAAVKFVRAHPDAHLMLVGIESAIRAQLKKLKALDDPALTIVPATEVVAMDDPVEVALRKKKDSSMRVALNHVKEGAAQACISAGNTGALMAVSRYVLKTLPGIERPAIAFALPNPTGYTMMLDLGANVDCEPQHLLQFAEMGHALVAALEGKERPTIGLLNIGEEVIKGNETIKRAGELLRASTLNFRGNVEGNDIYKGTVDVIVCDGFVGNVALKTSEGLAQMLSDIIREEFGRSLMSKLMALLALPVLMRFKKRVDHRQYNGAALLGLKSLVIKSHGSADAYAFEWAIKRGYDAVKNGVLERLTRAMADNSVSLGDGEHDAGGAGHTGPAAGQHAEPPAAQSSKA.

The disordered stretch occupies residues 335-368; the sequence is VSLGDGEHDAGGAGHTGPAAGQHAEPPAAQSSKA.

Belongs to the PlsX family. In terms of assembly, homodimer. Probably interacts with PlsY.

It localises to the cytoplasm. It carries out the reaction a fatty acyl-[ACP] + phosphate = an acyl phosphate + holo-[ACP]. The protein operates within lipid metabolism; phospholipid metabolism. Its function is as follows. Catalyzes the reversible formation of acyl-phosphate (acyl-PO(4)) from acyl-[acyl-carrier-protein] (acyl-ACP). This enzyme utilizes acyl-ACP as fatty acyl donor, but not acyl-CoA. This Burkholderia vietnamiensis (strain G4 / LMG 22486) (Burkholderia cepacia (strain R1808)) protein is Phosphate acyltransferase.